Reading from the N-terminus, the 240-residue chain is UDP-2,3-diacylglucosamine hydrolase (240 aa).

The Mn(2+) site is built by Asp-8, His-10, Asp-41, Asn-79, and His-114. 79-80 (NR) serves as a coordination point for substrate. Asp-122, Ser-160, Asn-164, Lys-167, and His-195 together coordinate substrate. 2 residues coordinate Mn(2+): His-195 and His-197.

The protein belongs to the LpxH family. It depends on Mn(2+) as a cofactor.

It is found in the cell inner membrane. It catalyses the reaction UDP-2-N,3-O-bis[(3R)-3-hydroxytetradecanoyl]-alpha-D-glucosamine + H2O = 2-N,3-O-bis[(3R)-3-hydroxytetradecanoyl]-alpha-D-glucosaminyl 1-phosphate + UMP + 2 H(+). It participates in glycolipid biosynthesis; lipid IV(A) biosynthesis; lipid IV(A) from (3R)-3-hydroxytetradecanoyl-[acyl-carrier-protein] and UDP-N-acetyl-alpha-D-glucosamine: step 4/6. Hydrolyzes the pyrophosphate bond of UDP-2,3-diacylglucosamine to yield 2,3-diacylglucosamine 1-phosphate (lipid X) and UMP by catalyzing the attack of water at the alpha-P atom. Involved in the biosynthesis of lipid A, a phosphorylated glycolipid that anchors the lipopolysaccharide to the outer membrane of the cell. The protein is UDP-2,3-diacylglucosamine hydrolase of Salmonella schwarzengrund (strain CVM19633).